The following is a 134-amino-acid chain: Spermadhesin-1 (134 aa).

Positions 1–20 (MKLSSVIPWALLLSTATVDS) are cleaved as a signal peptide. Disulfide bonds link cysteine 30–cysteine 51 and cysteine 74–cysteine 95. Residues 30-131 (CGGILKEESG…SFYEVLYFQD (102 aa)) enclose the CUB domain.

This sequence belongs to the spermadhesin family. As to expression, seminal vesicle tissue, ampulla and weakly in tissue of epididymis.

The protein resides in the secreted. In terms of biological role, stimulates cell division and progesterone secretion of bovine granulosa cells in vitro in a potent and dose dependent manner. This protein appears to be a potent growth factor with effects on ovarian granulosa cells. This is Spermadhesin-1 (SPADH1) from Bos taurus (Bovine).